Reading from the N-terminus, the 127-residue chain is Small ribosomal subunit protein bS6 (127 aa).

Positions 104 to 127 (QGAEKGKSSRKEKVAAEAEASEEA) are disordered. The span at 107-119 (EKGKSSRKEKVAA) shows a compositional bias: basic and acidic residues.

It belongs to the bacterial ribosomal protein bS6 family.

Its function is as follows. Binds together with bS18 to 16S ribosomal RNA. This chain is Small ribosomal subunit protein bS6, found in Coxiella burnetii (strain CbuG_Q212) (Coxiella burnetii (strain Q212)).